We begin with the raw amino-acid sequence, 803 residues long: Phosphoribosylformylglycinamidine synthase subunit PurL (803 aa).

His-65 is an active-site residue. 2 residues coordinate ATP: Tyr-68 and Lys-107. Glu-109 lines the Mg(2+) pocket. Residues 110–113 (SHNH) and Arg-132 contribute to the substrate site. The active-site Proton acceptor is His-111. A Mg(2+)-binding site is contributed by Asp-133. Gln-256 contributes to the substrate binding site. Residue Asp-284 participates in Mg(2+) binding. Position 328–330 (328–330 (ESQ)) interacts with substrate. 2 residues coordinate ATP: Asn-537 and Gly-574. Mg(2+) is bound at residue Asn-575. Ser-577 contributes to the substrate binding site.

It belongs to the FGAMS family. As to quaternary structure, monomer. Part of the FGAM synthase complex composed of 1 PurL, 1 PurQ and 2 PurS subunits.

The protein localises to the cytoplasm. The catalysed reaction is N(2)-formyl-N(1)-(5-phospho-beta-D-ribosyl)glycinamide + L-glutamine + ATP + H2O = 2-formamido-N(1)-(5-O-phospho-beta-D-ribosyl)acetamidine + L-glutamate + ADP + phosphate + H(+). Its pathway is purine metabolism; IMP biosynthesis via de novo pathway; 5-amino-1-(5-phospho-D-ribosyl)imidazole from N(2)-formyl-N(1)-(5-phospho-D-ribosyl)glycinamide: step 1/2. Part of the phosphoribosylformylglycinamidine synthase complex involved in the purines biosynthetic pathway. Catalyzes the ATP-dependent conversion of formylglycinamide ribonucleotide (FGAR) and glutamine to yield formylglycinamidine ribonucleotide (FGAM) and glutamate. The FGAM synthase complex is composed of three subunits. PurQ produces an ammonia molecule by converting glutamine to glutamate. PurL transfers the ammonia molecule to FGAR to form FGAM in an ATP-dependent manner. PurS interacts with PurQ and PurL and is thought to assist in the transfer of the ammonia molecule from PurQ to PurL. This chain is Phosphoribosylformylglycinamidine synthase subunit PurL, found in Prochlorococcus marinus (strain NATL2A).